Here is a 225-residue protein sequence, read N- to C-terminus: 7-cyano-7-deazaguanine synthase (225 aa).

An ATP-binding site is contributed by 10–20; sequence LSGGIDSATAA. Residues Cys191, Cys199, Cys202, and Cys205 each coordinate Zn(2+).

The protein belongs to the QueC family. Zn(2+) serves as cofactor.

It carries out the reaction 7-carboxy-7-deazaguanine + NH4(+) + ATP = 7-cyano-7-deazaguanine + ADP + phosphate + H2O + H(+). It participates in purine metabolism; 7-cyano-7-deazaguanine biosynthesis. Functionally, catalyzes the ATP-dependent conversion of 7-carboxy-7-deazaguanine (CDG) to 7-cyano-7-deazaguanine (preQ(0)). The protein is 7-cyano-7-deazaguanine synthase of Prochlorococcus marinus (strain NATL1A).